Here is a 413-residue protein sequence, read N- to C-terminus: Probable alpha-amylase 2 (413 aa).

Residues 74–75 and 191–196 contribute to the substrate site; these read YL and RFDFAR. D193 acts as the Nucleophile in catalysis. The active-site Proton donor is E218. Substrate-binding positions include W220, S222, Q239, D246, K280, 286 to 288, H299, Q305, K386, and W411; that span reads GWW.

This sequence belongs to the glycosyl hydrolase 13 family. Requires Ca(2+) as cofactor. Expressed in developing siliques.

It is found in the cytoplasm. The protein localises to the cytosol. The enzyme catalyses Endohydrolysis of (1-&gt;4)-alpha-D-glucosidic linkages in polysaccharides containing three or more (1-&gt;4)-alpha-linked D-glucose units.. Probable alpha-amylase that does not seem to be required for breakdown of transitory starch in leaves. In Arabidopsis thaliana (Mouse-ear cress), this protein is Probable alpha-amylase 2 (AMY2).